A 274-amino-acid chain; its full sequence is Dehydration-responsive element-binding protein 2A (274 aa).

Composition is skewed to basic and acidic residues over residues 1–10 (MERGEGRRGD) and 35–50 (KWWK…ENSS). A disordered region spans residues 1-75 (MERGEGRRGD…KGGPENSNCA (75 aa)). The AP2/ERF DNA-binding region spans 75–132 (AYRGVRQRTWGKWVAEIREPNRGRRLWLGSFPTALEAAHAYDEAARAMYGPTARVNFA).

Belongs to the AP2/ERF transcription factor family. ERF subfamily.

Its subcellular location is the nucleus. Its function is as follows. Transcriptional activator that binds specifically to the DNA sequence 5'-[AG]CCGAC-3'. Binding to the C-repeat/DRE element mediates high salinity- and dehydration-inducible transcription. This is Dehydration-responsive element-binding protein 2A (DREB2A) from Oryza sativa subsp. indica (Rice).